The sequence spans 429 residues: Dihydroorotase (429 aa).

Residues histidine 59 and histidine 61 each coordinate Zn(2+). Substrate-binding positions include 61–63 and asparagine 93; that span reads HLR. The Zn(2+) site is built by lysine 143, histidine 171, histidine 229, and aspartate 298. Position 143 is an N6-carboxylysine (lysine 143). Aspartate 298 is a catalytic residue. Substrate contacts are provided by residues histidine 302 and 316-317; that span reads AG.

This sequence belongs to the metallo-dependent hydrolases superfamily. DHOase family. Class I DHOase subfamily. Requires Zn(2+) as cofactor.

It catalyses the reaction (S)-dihydroorotate + H2O = N-carbamoyl-L-aspartate + H(+). It functions in the pathway pyrimidine metabolism; UMP biosynthesis via de novo pathway; (S)-dihydroorotate from bicarbonate: step 3/3. In terms of biological role, catalyzes the reversible cyclization of carbamoyl aspartate to dihydroorotate. The protein is Dihydroorotase of Methanosphaera stadtmanae (strain ATCC 43021 / DSM 3091 / JCM 11832 / MCB-3).